The following is a 175-amino-acid chain: Regenerating islet-derived protein 3-gamma (175 aa).

A signal peptide spans 1 to 26 (MLPPMALPSVSWMLLSCLILLCQVQG). The propeptide occupies 27–37 (EETQKELPSPR). 3 disulfides stabilise this stretch: Cys40–Cys51, Cys68–Cys171, and Cys146–Cys163. Positions 47 to 172 (YGSPCYALFL…CDAKLPYVCK (126 aa)) constitute a C-type lectin domain. The segment at 103–118 (WIGLHDPTQGSEPDGD) is sufficient to activate EXTL3. His107 is a binding site for Zn(2+). The EPN motif lies at 114–116 (EPD). The Zn(2+) site is built by Glu121 and His145.

As to quaternary structure, forms a hexameric membrane-permeabilizing oligomeric pore on membrane phospholipids. The hexamer is formed by three dimers related by helical symmetry. Forms filaments, filamentation traps pore complexes and limits damage to host cells. Interacts with EXTL3. Proteolytic processing by trypsin removes an inhibitory N-terminal propeptide and is essential for peptidoglycan binding and antibacterial activity. Predominantly expressed in pancreas, where it may be restricted to exocrine pancreas. Moderate expression levels in testis and weak in heart, kidney and placenta.

It is found in the secreted. The protein resides in the cytoplasm. Its activity is regulated as follows. Lipopolysaccharide inhibits pore-forming activity, explaining why is bactericidal for Gram-positive but not Gram-negative bacteria. Functionally, bactericidal C-type lectin which acts exclusively against Gram-positive bacteria and mediates bacterial killing by binding to surface-exposed carbohydrate moieties of peptidoglycan. Restricts bacterial colonization of the intestinal epithelial surface and consequently limits activation of adaptive immune responses by the microbiota. Acts as a hormone in response to different stimuli like anti-inflammatory signals, such as IL17A, or gut microbiome. Is secreted by different cell types to activate its receptor EXTL3 and induce cell specific signaling pathways. Induced by IL17A in keratinocytes, regulates keratinocyte proliferation and differentiation after skin injury. In parallel, inhibits skin inflammation through the inhibition of inflammatory cytokines such as IL6 and TNF. Induced by IL22 in lung epithelial cells, inhibits cytokine production and regulates allergic airway inflammation. Induced in small intestine by inulin-enriched diet and Lactobacillus gasseri enriched microbiome, plays a role in the improvement of gut barrier function, the regulation of energy balance and glucose levels. Modulates microbiota composition in duodenal contents. Produced by nociceptor in response to endotoxins, prevents endotoxic death by targeting kynurenine pathway in microglia. In terms of biological role, has bacteriostatic activity. Its function is as follows. Has bactericidal activity against L.monocytogenes and methicillin-resistant S.aureus. This Homo sapiens (Human) protein is Regenerating islet-derived protein 3-gamma.